Reading from the N-terminus, the 178-residue chain is Capsid assembly scaffolding protein (178 aa).

Belongs to the SPP1-like scaffolding protein family. Homodimer.

In terms of biological role, scaffolding protein involved in the icosahedric procapsid assembly. Coassembles with the capsid proteins to form the procapsid, in which the scaffolding protein is found within the external shell of icosahedrally arranged capsid protein subunits. In a subsequent step the scaffolding protein molecules are released from the procapsid. This Lactobacillus delbrueckii (Lactococcus delbrueckii bacteriophage LL-H) protein is Capsid assembly scaffolding protein (g20).